The primary structure comprises 446 residues: tRNA-2-methylthio-N(6)-dimethylallyladenosine synthase (446 aa).

Residues 5–121 (RRFYIQTFGC…LPSLIDDAAS (117 aa)) enclose the MTTase N-terminal domain. The [4Fe-4S] cluster site is built by cysteine 14, cysteine 50, cysteine 84, cysteine 157, cysteine 161, and cysteine 164. In terms of domain architecture, Radical SAM core spans 143-373 (REGRISAFIP…IDLQQEISAE (231 aa)). The TRAM domain maps to 376 to 439 (RRQVGTVAEV…SATLSGSREG (64 aa)).

Belongs to the methylthiotransferase family. MiaB subfamily. In terms of assembly, monomer. Requires [4Fe-4S] cluster as cofactor.

The protein resides in the cytoplasm. It carries out the reaction N(6)-dimethylallyladenosine(37) in tRNA + (sulfur carrier)-SH + AH2 + 2 S-adenosyl-L-methionine = 2-methylsulfanyl-N(6)-dimethylallyladenosine(37) in tRNA + (sulfur carrier)-H + 5'-deoxyadenosine + L-methionine + A + S-adenosyl-L-homocysteine + 2 H(+). Its function is as follows. Catalyzes the methylthiolation of N6-(dimethylallyl)adenosine (i(6)A), leading to the formation of 2-methylthio-N6-(dimethylallyl)adenosine (ms(2)i(6)A) at position 37 in tRNAs that read codons beginning with uridine. The polypeptide is tRNA-2-methylthio-N(6)-dimethylallyladenosine synthase (Chlorobium luteolum (strain DSM 273 / BCRC 81028 / 2530) (Pelodictyon luteolum)).